The sequence spans 159 residues: SsrA-binding protein (159 aa).

The interval 137 to 159 (KRQTEKERDWEREKQRLFQRDQR) is disordered.

It belongs to the SmpB family.

The protein resides in the cytoplasm. In terms of biological role, required for rescue of stalled ribosomes mediated by trans-translation. Binds to transfer-messenger RNA (tmRNA), required for stable association of tmRNA with ribosomes. tmRNA and SmpB together mimic tRNA shape, replacing the anticodon stem-loop with SmpB. tmRNA is encoded by the ssrA gene; the 2 termini fold to resemble tRNA(Ala) and it encodes a 'tag peptide', a short internal open reading frame. During trans-translation Ala-aminoacylated tmRNA acts like a tRNA, entering the A-site of stalled ribosomes, displacing the stalled mRNA. The ribosome then switches to translate the ORF on the tmRNA; the nascent peptide is terminated with the 'tag peptide' encoded by the tmRNA and targeted for degradation. The ribosome is freed to recommence translation, which seems to be the essential function of trans-translation. In Cellvibrio japonicus (strain Ueda107) (Pseudomonas fluorescens subsp. cellulosa), this protein is SsrA-binding protein.